Reading from the N-terminus, the 778-residue chain is Probable cation-transporting ATPase exp7 (778 aa).

Over 1-37 (MDKNKIMGLTQREVKERQAEGLVNDFTASASTSTWQI) the chain is Cytoplasmic. Residues 38-57 (VKRNVFTLFNALNFAIALAL) form a helical membrane-spanning segment. The Extracellular portion of the chain corresponds to 58–64 (AFVQAWS). Residues 65 to 84 (NLVFFAVICFNAFSGIVTEL) traverse the membrane as a helical segment. The Cytoplasmic segment spans residues 85–209 (RAKHMVDKLN…PINSRIMKSL (125 aa)). The chain crosses the membrane as a helical span at residues 210 to 229 (DKLAGFTGKIIIPFGLALLL). Over 230 to 242 (EALLLKGLPLKSS) the chain is Extracellular. A helical membrane pass occupies residues 243–260 (VVNSSTALLGMLPKGIAL). At 261–586 (LTITSLLTAV…FEGRRVVNNI (326 aa)) the chain is on the cytoplasmic side. Catalysis depends on D298, which acts as the 4-aspartylphosphate intermediate. The Mg(2+) site is built by D532 and D536. The helical transmembrane segment at 587-606 (AHIAPIFLIKTIYSFLLAVI) threads the bilayer. At 607-624 (CIASALLGRSEWILIFPF) the chain is on the extracellular side. Residues 625 to 645 (IPIQITMIDQFVEGFPPFVLT) form a helical membrane-spanning segment. Topologically, residues 646-663 (FERNIKPVEQNFLRKSML) are cytoplasmic. The chain crosses the membrane as a helical span at residues 664 to 684 (RALPSALMVVFSVLFVKMFGA). The Extracellular segment spans residues 685–689 (SQGWS). A helical membrane pass occupies residues 690–708 (ELEISTLLYYLLGSIGFLS). The Cytoplasmic segment spans residues 709-716 (VFRACMPF). The chain crosses the membrane as a helical span at residues 717-739 (TLWRVLLIVWSVGGFLATALFPR). Residues 740–757 (IQKLLEISTLTEQTLPVY) lie on the Extracellular side of the membrane. Residues 758-777 (GVMMLVFTVIFILTSRYQAK) traverse the membrane as a helical segment. Residue K778 is a topological domain, cytoplasmic.

Belongs to the cation transport ATPase (P-type) (TC 3.A.3) family.

It localises to the cell membrane. The enzyme catalyses ATP + H2O = ADP + phosphate + H(+). This is Probable cation-transporting ATPase exp7 (exp7) from Streptococcus pneumoniae serotype 4 (strain ATCC BAA-334 / TIGR4).